We begin with the raw amino-acid sequence, 398 residues long: Succinyl-diaminopimelate desuccinylase (398 aa).

Residue His73 coordinates Zn(2+). Residue Asp75 is part of the active site. Asp106 is a binding site for Zn(2+). Residue Glu140 is the Proton acceptor of the active site. 3 residues coordinate Zn(2+): Glu141, Glu169, and His366.

This sequence belongs to the peptidase M20A family. DapE subfamily. In terms of assembly, homodimer. Zn(2+) is required as a cofactor. The cofactor is Co(2+).

It carries out the reaction N-succinyl-(2S,6S)-2,6-diaminopimelate + H2O = (2S,6S)-2,6-diaminopimelate + succinate. The protein operates within amino-acid biosynthesis; L-lysine biosynthesis via DAP pathway; LL-2,6-diaminopimelate from (S)-tetrahydrodipicolinate (succinylase route): step 3/3. Functionally, catalyzes the hydrolysis of N-succinyl-L,L-diaminopimelic acid (SDAP), forming succinate and LL-2,6-diaminopimelate (DAP), an intermediate involved in the bacterial biosynthesis of lysine and meso-diaminopimelic acid, an essential component of bacterial cell walls. The sequence is that of Succinyl-diaminopimelate desuccinylase from Agrobacterium fabrum (strain C58 / ATCC 33970) (Agrobacterium tumefaciens (strain C58)).